A 556-amino-acid polypeptide reads, in one-letter code: Arginine--tRNA ligase (556 aa).

Residues 134–144 (ANPTGPLHIGH) carry the 'HIGH' region motif.

Belongs to the class-I aminoacyl-tRNA synthetase family. Monomer.

The protein localises to the cytoplasm. The catalysed reaction is tRNA(Arg) + L-arginine + ATP = L-arginyl-tRNA(Arg) + AMP + diphosphate. The protein is Arginine--tRNA ligase of Micrococcus luteus (strain ATCC 4698 / DSM 20030 / JCM 1464 / CCM 169 / CCUG 5858 / IAM 1056 / NBRC 3333 / NCIMB 9278 / NCTC 2665 / VKM Ac-2230) (Micrococcus lysodeikticus).